A 415-amino-acid polypeptide reads, in one-letter code: Putative competence-damage inducible protein (415 aa).

It belongs to the CinA family.

The sequence is that of Putative competence-damage inducible protein from Listeria welshimeri serovar 6b (strain ATCC 35897 / DSM 20650 / CCUG 15529 / CIP 8149 / NCTC 11857 / SLCC 5334 / V8).